We begin with the raw amino-acid sequence, 469 residues long: MTSQLHKKGEAWSARFSEPMSELVKRYTSSVFFDKRLALVDIAGSLAHANMLAAQKIINADDLAAIERGMAQIKGEIERGEFEWQLDLEDVHLNIEARLTALIGDAGKRLHTGRSRNDQVATDIRLWLRGEIDRIGGLLNDLRGALIDLAEQNADTIMPGFTHLQVAQPVTFGHHLLAYVEMFTRDAERMRDCRTRVNRLPLGAAALAGTSYPIDRHAVAKTLGFDGICANSLDAVSDRDFAIEFTAASALVMTHVSRFSEELVLWMSPRVGFIDIADRFCTGSSIMPQKKNPDVPELARGKTGRVNGHLMALLTLMKGQPLAYNKDNQEDKEPLFDTVDTVADTLRIFAEMVAGITVKPDAMRAAALQGFSTATDLADYLVKRGLPFRDAHEAVAHAVKICDDRGIDLADLTLDEMKQELPNVAHLIGDDVFGYLTLEGSVASRNHPGGTSPDQVRAAVKAARAALAK.

This sequence belongs to the lyase 1 family. Argininosuccinate lyase subfamily.

The protein resides in the cytoplasm. The catalysed reaction is 2-(N(omega)-L-arginino)succinate = fumarate + L-arginine. Its pathway is amino-acid biosynthesis; L-arginine biosynthesis; L-arginine from L-ornithine and carbamoyl phosphate: step 3/3. This chain is Argininosuccinate lyase, found in Burkholderia cenocepacia (strain HI2424).